The sequence spans 1112 residues: DNA polymerase II large subunit (1112 aa).

This sequence belongs to the archaeal DNA polymerase II family. In terms of assembly, heterodimer of a large subunit and a small subunit.

It catalyses the reaction DNA(n) + a 2'-deoxyribonucleoside 5'-triphosphate = DNA(n+1) + diphosphate. The enzyme catalyses Exonucleolytic cleavage in the 3'- to 5'-direction to yield nucleoside 5'-phosphates.. Its function is as follows. Possesses two activities: a DNA synthesis (polymerase) and an exonucleolytic activity that degrades single-stranded DNA in the 3'- to 5'-direction. Has a template-primer preference which is characteristic of a replicative DNA polymerase. This Cenarchaeum symbiosum (strain A) protein is DNA polymerase II large subunit.